We begin with the raw amino-acid sequence, 634 residues long: tRNA uridine 5-carboxymethylaminomethyl modification enzyme MnmG (634 aa).

Residue 14–19 (GGGHAG) participates in FAD binding. 279-293 (GPRYCPSIEDKVVRF) lines the NAD(+) pocket.

Belongs to the MnmG family. Homodimer. Heterotetramer of two MnmE and two MnmG subunits. FAD serves as cofactor.

Its subcellular location is the cytoplasm. In terms of biological role, NAD-binding protein involved in the addition of a carboxymethylaminomethyl (cmnm) group at the wobble position (U34) of certain tRNAs, forming tRNA-cmnm(5)s(2)U34. In Xanthomonas campestris pv. campestris (strain B100), this protein is tRNA uridine 5-carboxymethylaminomethyl modification enzyme MnmG.